Here is a 235-residue protein sequence, read N- to C-terminus: 5'-methylthioadenosine/S-adenosylhomocysteine nucleosidase (235 aa).

The active-site Proton acceptor is the glutamate 13. Residues glycine 79, methionine 154, and 175 to 176 (ME) each bind substrate. Catalysis depends on aspartate 199, which acts as the Proton donor.

This sequence belongs to the PNP/UDP phosphorylase family. MtnN subfamily.

It catalyses the reaction S-adenosyl-L-homocysteine + H2O = S-(5-deoxy-D-ribos-5-yl)-L-homocysteine + adenine. The enzyme catalyses S-methyl-5'-thioadenosine + H2O = 5-(methylsulfanyl)-D-ribose + adenine. The catalysed reaction is 5'-deoxyadenosine + H2O = 5-deoxy-D-ribose + adenine. It functions in the pathway amino-acid biosynthesis; L-methionine biosynthesis via salvage pathway; S-methyl-5-thio-alpha-D-ribose 1-phosphate from S-methyl-5'-thioadenosine (hydrolase route): step 1/2. In terms of biological role, catalyzes the irreversible cleavage of the glycosidic bond in both 5'-methylthioadenosine (MTA) and S-adenosylhomocysteine (SAH/AdoHcy) to adenine and the corresponding thioribose, 5'-methylthioribose and S-ribosylhomocysteine, respectively. Also cleaves 5'-deoxyadenosine, a toxic by-product of radical S-adenosylmethionine (SAM) enzymes, into 5-deoxyribose and adenine. The protein is 5'-methylthioadenosine/S-adenosylhomocysteine nucleosidase of Chromohalobacter salexigens (strain ATCC BAA-138 / DSM 3043 / CIP 106854 / NCIMB 13768 / 1H11).